The chain runs to 257 residues: NAD-capped RNA hydrolase NudC (257 aa).

Residues lysine 25 and arginine 69 each contribute to the substrate site. Zn(2+) is bound by residues cysteine 98 and cysteine 101. Residue glutamate 111 participates in substrate binding. Residues cysteine 116 and cysteine 119 each coordinate Zn(2+). Tyrosine 124 is a substrate binding site. Residues 125 to 248 (PQIAPCIIVA…TVARRLIEDT (124 aa)) enclose the Nudix hydrolase domain. 3 residues coordinate a divalent metal cation: alanine 158, glutamate 174, and glutamate 178. The Nudix box signature appears at 159-180 (GFVEVGETLEQAVAREVMEESG). 192 to 199 (QPWPFPQS) provides a ligand contact to substrate. Position 219 (glutamate 219) interacts with a divalent metal cation. Alanine 241 provides a ligand contact to substrate.

This sequence belongs to the Nudix hydrolase family. NudC subfamily. As to quaternary structure, homodimer. It depends on Mg(2+) as a cofactor. The cofactor is Mn(2+). Zn(2+) is required as a cofactor.

The catalysed reaction is a 5'-end NAD(+)-phospho-ribonucleoside in mRNA + H2O = a 5'-end phospho-adenosine-phospho-ribonucleoside in mRNA + beta-nicotinamide D-ribonucleotide + 2 H(+). The enzyme catalyses NAD(+) + H2O = beta-nicotinamide D-ribonucleotide + AMP + 2 H(+). It carries out the reaction NADH + H2O = reduced beta-nicotinamide D-ribonucleotide + AMP + 2 H(+). In terms of biological role, mRNA decapping enzyme that specifically removes the nicotinamide adenine dinucleotide (NAD) cap from a subset of mRNAs by hydrolyzing the diphosphate linkage to produce nicotinamide mononucleotide (NMN) and 5' monophosphate mRNA. The NAD-cap is present at the 5'-end of some mRNAs and stabilizes RNA against 5'-processing. Has preference for mRNAs with a 5'-end purine. Catalyzes the hydrolysis of a broad range of dinucleotide pyrophosphates. This Shigella boydii serotype 18 (strain CDC 3083-94 / BS512) protein is NAD-capped RNA hydrolase NudC.